The sequence spans 380 residues: uncharacterized protein (380 aa).

The 32-residue stretch at 287 to 318 (LRPKIYQDKCKNCRECLVEKYCPTFAIKRENG) folds into the 4Fe-4S ferredoxin-type domain.

This is an uncharacterized protein from Methanocaldococcus jannaschii (strain ATCC 43067 / DSM 2661 / JAL-1 / JCM 10045 / NBRC 100440) (Methanococcus jannaschii).